Consider the following 357-residue polypeptide: Probable butyrate kinase (357 aa).

Belongs to the acetokinase family.

It is found in the cytoplasm. The catalysed reaction is butanoate + ATP = butanoyl phosphate + ADP. This chain is Probable butyrate kinase, found in Thermotoga petrophila (strain ATCC BAA-488 / DSM 13995 / JCM 10881 / RKU-1).